The primary structure comprises 550 residues: Membrane protein insertase YidC (550 aa).

Transmembrane regions (helical) follow at residues 6-26 (LVLFLVFSLSLVMLWNAWLKQ), 333-353 (VVDYGWLTVIAAPLFWVLSWI), 356-376 (VVGNWGWAIIIVTILIKLMFF), 430-450 (LPILVQIPVFISLYWVLLGSV), 469-489 (PYFILPVIMGVSMLIQMKLNP), and 504-524 (PVIFTFMFLWFPSGLVLYWVV).

The protein belongs to the OXA1/ALB3/YidC family. Type 1 subfamily. In terms of assembly, interacts with the Sec translocase complex via SecD. Specifically interacts with transmembrane segments of nascent integral membrane proteins during membrane integration.

It localises to the cell inner membrane. Its function is as follows. Required for the insertion and/or proper folding and/or complex formation of integral membrane proteins into the membrane. Involved in integration of membrane proteins that insert both dependently and independently of the Sec translocase complex, as well as at least some lipoproteins. Aids folding of multispanning membrane proteins. This is Membrane protein insertase YidC from Aromatoleum aromaticum (strain DSM 19018 / LMG 30748 / EbN1) (Azoarcus sp. (strain EbN1)).